Reading from the N-terminus, the 521-residue chain is Importin subunit alpha-4 (521 aa).

Residues 1–29 (MAENPSLENHRIKSFKNKGRDVETMRRHR) are disordered. Residue Ala-2 is modified to N-acetylalanine. Residues 2-58 (AENPSLENHRIKSFKNKGRDVETMRRHRNEVTVELRKNKRDEHLLKKRNVPQEESLE) enclose the IBB domain. Over residues 18–29 (KGRDVETMRRHR) the composition is skewed to basic and acidic residues. Residues 43-52 (EHLLKKRNVP) carry the Nuclear localization signal motif. Ser-56 and Ser-60 each carry phosphoserine. One copy of the ARM 1; truncated repeat lies at 66 to 106 (FKAQNVTLEAILQNATSDNPVVQLSAVQAARKLLSSDRNPP). ARM repeat units follow at residues 107 to 149 (IDDL…TSAQ), 150 to 194 (TQAV…CRDY), 195 to 233 (VISL…NKDP), 234 to 278 (PPPM…EQIQ), 279 to 318 (MVID…TDEQ), 319 to 360 (TQVV…NQQQ), 361 to 400 (VQAV…ISGR), and 401 to 443 (KDQV…IMAG). Positions 137-229 (WALTNIASGT…VTWVIVNLCR (93 aa)) are NLS binding site (major). The interval 306-394 (RAVGNIVTGT…QKEAAWAISN (89 aa)) is NLS binding site (minor). Residues 447 to 485 (STIAEIIEECGGLEKIEVLQQHENEDIYKLAFEIIDQYF) form an ARM 10; atypical repeat. Tyr-484 is subject to Phosphotyrosine.

It belongs to the importin alpha family. As to quaternary structure, forms a complex with importin subunit beta-1. Interacts with DDX21. Interacts with NCBP1, NCBP2/CBP20 and NCBP3. Interacts with RCC1. Interacts with ZC3H11A. In terms of assembly, (Microbial infection) Interacts with HIV-1 integrase; this interaction might play a role in nuclear import of HIV pre-integration complex. (Microbial infection) Interacts with influenza virus nucleoprotein; this interaction might play a role in nuclear import of viral genome. In terms of tissue distribution, ubiquitous. Highest levels in heart and skeletal muscle.

It localises to the cytoplasm. The protein resides in the nucleus. Functions in nuclear protein import as an adapter protein for nuclear receptor KPNB1. Binds specifically and directly to substrates containing either a simple or bipartite NLS motif. Docking of the importin/substrate complex to the nuclear pore complex (NPC) is mediated by KPNB1 through binding to nucleoporin FxFG repeats and the complex is subsequently translocated through the pore by an energy requiring, Ran-dependent mechanism. At the nucleoplasmic side of the NPC, Ran binds to importin-beta and the three components separate and importin-alpha and -beta are re-exported from the nucleus to the cytoplasm where GTP hydrolysis releases Ran from importin. The directionality of nuclear import is thought to be conferred by an asymmetric distribution of the GTP- and GDP-bound forms of Ran between the cytoplasm and nucleus. In vitro, mediates the nuclear import of human cytomegalovirus UL84 by recognizing a non-classical NLS. Recognizes NLSs of influenza A virus nucleoprotein probably through ARM repeats 7-9. The sequence is that of Importin subunit alpha-4 (KPNA3) from Homo sapiens (Human).